The sequence spans 217 residues: Pyridoxine/pyridoxamine 5'-phosphate oxidase (217 aa).

FMN-binding positions include 66–71 (RMVLLK), 81–82 (FT), Arg87, Lys88, and Gln110. A substrate-binding site is contributed by Lys71. Residues Tyr128, Arg132, and Ser136 each contribute to the substrate site. FMN-binding positions include 145–146 (QS) and Trp190. 196–198 (RLH) is a substrate binding site. Arg200 provides a ligand contact to FMN.

This sequence belongs to the pyridoxamine 5'-phosphate oxidase family. Homodimer. The cofactor is FMN.

It catalyses the reaction pyridoxamine 5'-phosphate + O2 + H2O = pyridoxal 5'-phosphate + H2O2 + NH4(+). It carries out the reaction pyridoxine 5'-phosphate + O2 = pyridoxal 5'-phosphate + H2O2. The protein operates within cofactor metabolism; pyridoxal 5'-phosphate salvage; pyridoxal 5'-phosphate from pyridoxamine 5'-phosphate: step 1/1. Its pathway is cofactor metabolism; pyridoxal 5'-phosphate salvage; pyridoxal 5'-phosphate from pyridoxine 5'-phosphate: step 1/1. Functionally, catalyzes the oxidation of either pyridoxine 5'-phosphate (PNP) or pyridoxamine 5'-phosphate (PMP) into pyridoxal 5'-phosphate (PLP). The chain is Pyridoxine/pyridoxamine 5'-phosphate oxidase from Psychromonas ingrahamii (strain DSM 17664 / CCUG 51855 / 37).